The chain runs to 76 residues: Rhesus theta defensin-1/2 subunit B (76 aa).

The signal sequence occupies residues 1–22; sequence MRTFALLTAMLLLVALHAQAEA. Positions 23-64 are excised as a propeptide; it reads RQARADEAAAQQQPGADDQGMAHSFTRPENAALPLSESARGL. A disordered region spans residues 25-54; it reads ARADEAAAQQQPGADDQGMAHSFTRPENAA. Over residues 30-44 the composition is skewed to low complexity; it reads AAAQQQPGADDQGMA. Residue R65 forms a Cyclopeptide (Arg-Cys) (interchain with C-73 in subunit A); in form RTD-1 linkage. A Cyclopeptide (Arg-Cys) (interchain with C-73 in subunit B); in form RTD-2 cross-link involves residue R65. A disulfide bridge connects residues C68 and C73. Residue C73 forms a Cyclopeptide (Cys-Arg) (interchain with R-65 in subunit A); in form RTD-1 linkage. A Cyclopeptide (Cys-Arg) (interchain with R-65 in subunit B); in form RTD-2 cross-link involves residue C73. The propeptide occupies 74–76; the sequence is QLL.

The protein belongs to the alpha-defensin family. Theta subfamily. As to quaternary structure, RTD-1 is a cyclic heterodimer composed of subunits A and B; disulfide-linked. RTD-2 is a cyclic homodimer composed of two subunits B; disulfide-linked. Forms a cyclic peptide with 1 subunit B (RTD-2) or with 1 subunit A (RTD-1). An additional intersubunit disulfide bond is formed. As to expression, RTD-1 is expressed in bone marrow. Detected in promyelocytes, myelocytes and mature neutrophils and monocytes.

In terms of biological role, RTD-1 and RTD-2 have similar antimicrobial activities against the Gram-positive bacteria S.aureus 502A and L.monocytogenes, the Gram-negative bacterium S.typhimurium, and the fungi C.albicans 16820 and C.neoformans 271A. RTD-2 is 2-3-fold less active than RTD-1 against E.coli ML35. The protein is Rhesus theta defensin-1/2 subunit B (RTD1B) of Macaca mulatta (Rhesus macaque).